The following is a 213-amino-acid chain: Uridine kinase (213 aa).

13–20 contacts ATP; it reads GASASGKS.

The protein belongs to the uridine kinase family.

It localises to the cytoplasm. The catalysed reaction is uridine + ATP = UMP + ADP + H(+). The enzyme catalyses cytidine + ATP = CMP + ADP + H(+). It functions in the pathway pyrimidine metabolism; CTP biosynthesis via salvage pathway; CTP from cytidine: step 1/3. The protein operates within pyrimidine metabolism; UMP biosynthesis via salvage pathway; UMP from uridine: step 1/1. This Haemophilus influenzae (strain PittEE) protein is Uridine kinase.